A 669-amino-acid chain; its full sequence is GTP-binding protein 1 (669 aa).

Residues 1 to 32 (MAAERSRSPMESPVPASMFAPEPSSPGAARAA) are disordered. A phosphoserine mark is found at S6, S8, S12, S24, S25, S44, S47, and S69. The tr-type G domain occupies 158-389 (FLEVRVAVVG…LNLLSPRTSY (232 aa)). Residues 167–174 (GNVDAGKS) form a G1 region. 167-174 (GNVDAGKS) is a GTP binding site. The G2 stretch occupies residues 206–210 (GRTSS). Residues 252–255 (DLAG) form a G3 region. GTP contacts are provided by residues 252–256 (DLAGH) and 308–311 (TKID). Positions 308 to 311 (TKID) are G4. The interval 366–368 (SNV) is G5. The span at 573–595 (LLQTTNNSPMNSKPQQIKMQSTK) shows a compositional bias: polar residues. The interval 573–669 (LLQTTNNSPM…GACMTPASGC (97 aa)) is disordered. S580 is modified (phosphoserine). The span at 633–645 (SSSLQPQPKPSSG) shows a compositional bias: low complexity. A compositionally biased stretch (basic residues) spans 646–657 (GRRRGGQRHKVK).

The protein belongs to the TRAFAC class translation factor GTPase superfamily. Classic translation factor GTPase family. GTPBP1 subfamily. As to quaternary structure, interacts with EXOSC2/RRP4, EXOSC3/RRP40, EXOSC5/RRP46, HNRNPD, HNRNPR and SYNCRIP. Identified in a complex with AANAT mRNA, but does not bind mRNA by itself.

It is found in the cytoplasm. Its function is as follows. Promotes degradation of target mRNA species. Plays a role in the regulation of circadian mRNA stability. Binds GTP and has GTPase activity. This chain is GTP-binding protein 1 (GTPBP1), found in Bos taurus (Bovine).